Consider the following 326-residue polypeptide: Transcription cofactor vestigial-like protein 3 (326 aa).

The disordered stretch occupies residues 57–80 (VTLPSKQEEEDEEEEEEEKDQPAE). A Glycyl lysine isopeptide (Lys-Gly) (interchain with G-Cter in SUMO2) cross-link involves residue lysine 62. Acidic residues predominate over residues 64–75 (EEEDEEEEEEEK). Lysine 126 participates in a covalent cross-link: Glycyl lysine isopeptide (Lys-Gly) (interchain with G-Cter in SUMO2). Disordered stretches follow at residues 175-203 (PPGT…PPAV) and 233-256 (HAHM…SALD). Basic residues predominate over residues 233 to 249 (HAHMHHRHRHHHHHHHP).

This sequence belongs to the vestigial family. In terms of tissue distribution, enriched in placenta.

It is found in the nucleus. Its function is as follows. May act as a specific coactivator for the mammalian TEFs. The sequence is that of Transcription cofactor vestigial-like protein 3 (VGLL3) from Homo sapiens (Human).